The following is a 397-amino-acid chain: ORC1-type DNA replication protein 1 (397 aa).

Residues 67-71 (TGKTA), Tyr-208, and Arg-220 each bind ATP.

It belongs to the CDC6/cdc18 family.

Involved in regulation of DNA replication. This chain is ORC1-type DNA replication protein 1 (cdc6-1), found in Sulfolobus acidocaldarius (strain ATCC 33909 / DSM 639 / JCM 8929 / NBRC 15157 / NCIMB 11770).